The sequence spans 782 residues: E3 ubiquitin-protein ligase SopA (782 aa).

Residues 140 to 170 are disordered; sequence SANNRPTVSEGRTPPVSPSLSLQATSSPSSP. Positions 157-170 are enriched in low complexity; that stretch reads PSLSLQATSSPSSP. Cys-753 (glycyl thioester intermediate) is an active-site residue.

Belongs to the SopA E3 ligase family. Post-translationally, ubiquitinated in the presence of host E1 ubiquitin-activating enzyme, E2 ubiquitin-conjugating enzyme and ubiquitin.

Its subcellular location is the secreted. It localises to the host cell. It catalyses the reaction S-ubiquitinyl-[E2 ubiquitin-conjugating enzyme]-L-cysteine + [acceptor protein]-L-lysine = [E2 ubiquitin-conjugating enzyme]-L-cysteine + N(6)-ubiquitinyl-[acceptor protein]-L-lysine.. Functionally, effector proteins function to alter host cell physiology and promote bacterial survival in host tissues. This protein is an E3 ubiquitin ligase that interferes with host's ubiquitination pathway. The polypeptide is E3 ubiquitin-protein ligase SopA (sopA) (Salmonella agona (strain SL483)).